The following is a 108-amino-acid chain: Large ribosomal subunit protein uL22 (108 aa).

It belongs to the universal ribosomal protein uL22 family. In terms of assembly, part of the 50S ribosomal subunit.

Its function is as follows. This protein binds specifically to 23S rRNA; its binding is stimulated by other ribosomal proteins, e.g. L4, L17, and L20. It is important during the early stages of 50S assembly. It makes multiple contacts with different domains of the 23S rRNA in the assembled 50S subunit and ribosome. The globular domain of the protein is located near the polypeptide exit tunnel on the outside of the subunit, while an extended beta-hairpin is found that lines the wall of the exit tunnel in the center of the 70S ribosome. The protein is Large ribosomal subunit protein uL22 of Nitratiruptor sp. (strain SB155-2).